A 306-amino-acid chain; its full sequence is UDP-N-acetylenolpyruvoylglucosamine reductase (306 aa).

One can recognise an FAD-binding PCMH-type domain in the interval 25-188; that stretch reads RVGGPADWLF…IEARFRAEPG (164 aa). The active site involves Arg168. The segment covering 199–214 has biased composition (basic and acidic residues); sequence EQLARRDASQPTKDRS. A disordered region spans residues 199-232; that stretch reads EQLARRDASQPTKDRSAGSTFRNPAGYSSTGRAD. A compositionally biased stretch (polar residues) spans 215–229; that stretch reads AGSTFRNPAGYSSTG. The active-site Proton donor is Ser217. Glu299 is an active-site residue.

The protein belongs to the MurB family. It depends on FAD as a cofactor.

It localises to the cytoplasm. The enzyme catalyses UDP-N-acetyl-alpha-D-muramate + NADP(+) = UDP-N-acetyl-3-O-(1-carboxyvinyl)-alpha-D-glucosamine + NADPH + H(+). Its pathway is cell wall biogenesis; peptidoglycan biosynthesis. In terms of biological role, cell wall formation. This Paracoccus denitrificans (strain Pd 1222) protein is UDP-N-acetylenolpyruvoylglucosamine reductase.